Here is a 527-residue protein sequence, read N- to C-terminus: T-complex protein 1 subunit delta (527 aa).

Belongs to the TCP-1 chaperonin family. As to quaternary structure, heterooligomeric complex of about 850 to 900 kDa that forms two stacked rings, 12 to 16 nm in diameter.

The protein localises to the cytoplasm. Functionally, molecular chaperone; assists the folding of proteins upon ATP hydrolysis. Known to play a role, in vitro, in the folding of actin and tubulin. The protein is T-complex protein 1 subunit delta (CCT4) of Yarrowia lipolytica (strain CLIB 122 / E 150) (Yeast).